A 302-amino-acid polypeptide reads, in one-letter code: 4-hydroxy-tetrahydrodipicolinate synthase (302 aa).

Thr55 provides a ligand contact to pyruvate. Tyr144 (proton donor/acceptor) is an active-site residue. Lys172 functions as the Schiff-base intermediate with substrate in the catalytic mechanism. A pyruvate-binding site is contributed by Val214.

It belongs to the DapA family. In terms of assembly, homotetramer; dimer of dimers.

The protein resides in the cytoplasm. The enzyme catalyses L-aspartate 4-semialdehyde + pyruvate = (2S,4S)-4-hydroxy-2,3,4,5-tetrahydrodipicolinate + H2O + H(+). It functions in the pathway amino-acid biosynthesis; L-lysine biosynthesis via DAP pathway; (S)-tetrahydrodipicolinate from L-aspartate: step 3/4. Its function is as follows. Catalyzes the condensation of (S)-aspartate-beta-semialdehyde [(S)-ASA] and pyruvate to 4-hydroxy-tetrahydrodipicolinate (HTPA). The polypeptide is 4-hydroxy-tetrahydrodipicolinate synthase (Prochlorococcus marinus (strain MIT 9303)).